The chain runs to 402 residues: Metacaspase-1 (402 aa).

Positions 1-79 are disordered; sequence MAYPGQGGHH…FAPPSGPIGP (79 aa). Residues 23-45 show a composition bias toward low complexity; it reads PAPHGYAQPGYGYAPPSGPPQGY. Active-site residues include His193 and Cys249.

It belongs to the peptidase C14B family.

Its function is as follows. Involved in cell death (apoptosis). This chain is Metacaspase-1 (MCA1), found in Mycosarcoma maydis (Corn smut fungus).